The primary structure comprises 256 residues: 5-keto-4-deoxy-D-glucarate aldolase (256 aa).

Histidine 50 (proton acceptor) is an active-site residue. Substrate is bound at residue glutamine 151. Glutamate 153 is a binding site for Mg(2+). The substrate site is built by serine 178 and aspartate 179. Position 179 (aspartate 179) interacts with Mg(2+).

It belongs to the HpcH/HpaI aldolase family. KDGluc aldolase subfamily. In terms of assembly, homohexamer; trimer of dimers. Requires Mg(2+) as cofactor.

It carries out the reaction 5-dehydro-4-deoxy-D-glucarate = 2-hydroxy-3-oxopropanoate + pyruvate. The catalysed reaction is 2-dehydro-3-deoxy-D-glucarate = 2-hydroxy-3-oxopropanoate + pyruvate. It participates in carbohydrate acid metabolism; galactarate degradation; D-glycerate from galactarate: step 2/3. Functionally, catalyzes the reversible retro-aldol cleavage of both 5-keto-4-deoxy-D-glucarate and 2-keto-3-deoxy-D-glucarate to pyruvate and tartronic semialdehyde. The protein is 5-keto-4-deoxy-D-glucarate aldolase of Shigella sonnei (strain Ss046).